Reading from the N-terminus, the 305-residue chain is Tetraacyldisaccharide 4'-kinase (305 aa).

ATP is bound at residue 39–46; the sequence is SVGGNGKT.

This sequence belongs to the LpxK family.

It carries out the reaction a lipid A disaccharide + ATP = a lipid IVA + ADP + H(+). It functions in the pathway glycolipid biosynthesis; lipid IV(A) biosynthesis; lipid IV(A) from (3R)-3-hydroxytetradecanoyl-[acyl-carrier-protein] and UDP-N-acetyl-alpha-D-glucosamine: step 6/6. Its function is as follows. Transfers the gamma-phosphate of ATP to the 4'-position of a tetraacyldisaccharide 1-phosphate intermediate (termed DS-1-P) to form tetraacyldisaccharide 1,4'-bis-phosphate (lipid IVA). The sequence is that of Tetraacyldisaccharide 4'-kinase from Pseudoalteromonas atlantica (strain T6c / ATCC BAA-1087).